Here is a 61-residue protein sequence, read N- to C-terminus: Large ribosomal subunit protein uL30 (61 aa).

This sequence belongs to the universal ribosomal protein uL30 family. Part of the 50S ribosomal subunit.

The protein is Large ribosomal subunit protein uL30 of Clostridioides difficile (strain 630) (Peptoclostridium difficile).